Reading from the N-terminus, the 752-residue chain is Myb-related protein A (752 aa).

A disordered region spans residues M1–E22. 3 HTH myb-type domains span residues K30 to L81, N82 to V137, and K138 to V188. 3 consecutive DNA-binding regions (H-T-H motif) follow at residues W58 to L81, W110 to L133, and W161 to M184. K199 participates in a covalent cross-link: Glycyl lysine isopeptide (Lys-Gly) (interchain with G-Cter in SUMO2). Positions I230–S295 are transcriptional activation domain. Residues S298–P553 are negative regulatory domain. K394 carries the post-translational modification N6-acetyllysine. The interval R451–P480 is disordered. Residues K592 and K602 each participate in a glycyl lysine isopeptide (Lys-Gly) (interchain with G-Cter in SUMO2) cross-link.

In terms of assembly, component of the DREAM complex (also named LINC complex) at least composed of E2F4, E2F5, LIN9, LIN37, LIN52, LIN54, MYBL1, MYBL2, RBL1, RBL2, RBBP4, TFDP1 and TFDP2. The complex exists in quiescent cells where it represses cell cycle-dependent genes. It dissociates in S phase when LIN9, LIN37, LIN52 and LIN54 form a subcomplex that binds to MYBL2. As to expression, expressed in a variety of lymphoid and solid tumor lines cultured in vitro.

It localises to the nucleus. Transcription factor that specifically recognizes the sequence 5'-YAAC[GT]G-3'. Acts as a master regulator of male meiosis by promoting expression of piRNAs: activates expression of both piRNA precursor RNAs and expression of protein-coding genes involved in piRNA metabolism. The piRNA metabolic process mediates the repression of transposable elements during meiosis by forming complexes composed of piRNAs and Piwi proteins and governs the methylation and subsequent repression of transposons, which is essential for the germline integrity. Transcriptional activator of SOX30. In Homo sapiens (Human), this protein is Myb-related protein A (MYBL1).